A 382-amino-acid polypeptide reads, in one-letter code: Alanine racemase (382 aa).

The Proton acceptor; specific for D-alanine role is filled by Lys37. At Lys37 the chain carries N6-(pyridoxal phosphate)lysine. Arg135 provides a ligand contact to substrate. Tyr267 serves as the catalytic Proton acceptor; specific for L-alanine. Residue Met315 participates in substrate binding.

Belongs to the alanine racemase family. Pyridoxal 5'-phosphate serves as cofactor.

The enzyme catalyses L-alanine = D-alanine. The protein operates within amino-acid biosynthesis; D-alanine biosynthesis; D-alanine from L-alanine: step 1/1. In terms of biological role, catalyzes the interconversion of L-alanine and D-alanine. May also act on other amino acids. The polypeptide is Alanine racemase (alr) (Geobacter sulfurreducens (strain ATCC 51573 / DSM 12127 / PCA)).